The following is a 367-amino-acid chain: Glutamate 5-kinase (367 aa).

An ATP-binding site is contributed by Lys10. Residues Ser50, Asp137, and Asn149 each contribute to the substrate site. ATP contacts are provided by residues 169-170 and 211-217; these read TD and TGGMSTK. One can recognise a PUA domain in the interval 275 to 353; it reads AGIITIDAGA…QDIEQVLGYE (79 aa).

This sequence belongs to the glutamate 5-kinase family.

The protein localises to the cytoplasm. It catalyses the reaction L-glutamate + ATP = L-glutamyl 5-phosphate + ADP. The protein operates within amino-acid biosynthesis; L-proline biosynthesis; L-glutamate 5-semialdehyde from L-glutamate: step 1/2. Functionally, catalyzes the transfer of a phosphate group to glutamate to form L-glutamate 5-phosphate. The chain is Glutamate 5-kinase from Pasteurella multocida (strain Pm70).